The sequence spans 228 residues: Leucyl/phenylalanyl-tRNA--protein transferase (228 aa).

The protein belongs to the L/F-transferase family.

It is found in the cytoplasm. It carries out the reaction N-terminal L-lysyl-[protein] + L-leucyl-tRNA(Leu) = N-terminal L-leucyl-L-lysyl-[protein] + tRNA(Leu) + H(+). The catalysed reaction is N-terminal L-arginyl-[protein] + L-leucyl-tRNA(Leu) = N-terminal L-leucyl-L-arginyl-[protein] + tRNA(Leu) + H(+). The enzyme catalyses L-phenylalanyl-tRNA(Phe) + an N-terminal L-alpha-aminoacyl-[protein] = an N-terminal L-phenylalanyl-L-alpha-aminoacyl-[protein] + tRNA(Phe). Functionally, functions in the N-end rule pathway of protein degradation where it conjugates Leu, Phe and, less efficiently, Met from aminoacyl-tRNAs to the N-termini of proteins containing an N-terminal arginine or lysine. This Thiobacillus denitrificans (strain ATCC 25259 / T1) protein is Leucyl/phenylalanyl-tRNA--protein transferase.